Reading from the N-terminus, the 124-residue chain is Acidic phospholipase A2 (124 aa).

Cystine bridges form between Cys-26/Cys-116, Cys-28/Cys-44, Cys-43/Cys-95, Cys-49/Cys-124, Cys-50/Cys-88, Cys-57/Cys-81, and Cys-75/Cys-86. Ca(2+)-binding residues include Tyr-27, Gly-29, and Gly-31. Residue His-47 is part of the active site. Ca(2+) is bound at residue Asp-48. Asp-89 is an active-site residue.

This sequence belongs to the phospholipase A2 family. Group II subfamily. D49 sub-subfamily. It depends on Ca(2+) as a cofactor. Expressed by the venom gland.

The protein resides in the secreted. The catalysed reaction is a 1,2-diacyl-sn-glycero-3-phosphocholine + H2O = a 1-acyl-sn-glycero-3-phosphocholine + a fatty acid + H(+). In terms of biological role, snake venom phospholipase A2 (PLA2) that inhibits ADP-induced platelet aggregation. PLA2 catalyzes the calcium-dependent hydrolysis of the 2-acyl groups in 3-sn-phosphoglycerides. This Gloydius ussuriensis (Ussuri mamushi) protein is Acidic phospholipase A2.